The sequence spans 314 residues: 2-methoxy-6-polyprenyl-1,4-benzoquinol methylase, mitochondrial (314 aa).

The N-terminal 19 residues, 1–19 (MLQSLNRSVRYLSTSIGSR), are a transit peptide targeting the mitochondrion. S-adenosyl-L-methionine-binding positions include threonine 109, aspartate 154, 186 to 187 (NS), and serine 203.

It belongs to the class I-like SAM-binding methyltransferase superfamily. MenG/UbiE family. Component of a multi-subunit COQ enzyme complex.

Its subcellular location is the mitochondrion inner membrane. It carries out the reaction a 2-methoxy-6-(all-trans-polyprenyl)benzene-1,4-diol + S-adenosyl-L-methionine = a 5-methoxy-2-methyl-3-(all-trans-polyprenyl)benzene-1,4-diol + S-adenosyl-L-homocysteine + H(+). The protein operates within cofactor biosynthesis; ubiquinone biosynthesis. Methyltransferase required for the conversion of 2-polyprenyl-6-methoxy-1,4-benzoquinol (DDMQH2) to 2-polyprenyl-3-methyl-6-methoxy-1,4-benzoquinol (DMQH2). The protein is 2-methoxy-6-polyprenyl-1,4-benzoquinol methylase, mitochondrial of Dictyostelium discoideum (Social amoeba).